A 193-amino-acid chain; its full sequence is Large ribosomal subunit protein uL11 (193 aa).

The protein belongs to the universal ribosomal protein uL11 family. As to quaternary structure, part of the ribosomal stalk of the 50S ribosomal subunit. Interacts with L10 and the large rRNA to form the base of the stalk. L10 forms an elongated spine to which L12 dimers bind in a sequential fashion forming a multimeric L10(L12)X complex. Post-translationally, one or more lysine residues are methylated.

In terms of biological role, forms part of the ribosomal stalk which helps the ribosome interact with GTP-bound translation factors. The chain is Large ribosomal subunit protein uL11 from Mycoplasmopsis synoviae (strain 53) (Mycoplasma synoviae).